Consider the following 304-residue polypeptide: Lipoprotein signal peptidase (304 aa).

Transmembrane regions (helical) follow at residues 28 to 48 (IKIK…IVFV), 86 to 106 (PAVP…TFIF), and 112 to 132 (LIVL…DRSV). Catalysis depends on residues D148 and D163. A helical transmembrane segment spans residues 163–183 (DICIVTGFALIFLTFVVDIFL).

Belongs to the peptidase A8 family.

Its subcellular location is the cell membrane. It carries out the reaction Release of signal peptides from bacterial membrane prolipoproteins. Hydrolyzes -Xaa-Yaa-Zaa-|-(S,diacylglyceryl)Cys-, in which Xaa is hydrophobic (preferably Leu), and Yaa (Ala or Ser) and Zaa (Gly or Ala) have small, neutral side chains.. It functions in the pathway protein modification; lipoprotein biosynthesis (signal peptide cleavage). Functionally, this protein specifically catalyzes the removal of signal peptides from prolipoproteins. The sequence is that of Lipoprotein signal peptidase from Mycoplasmoides gallisepticum (strain R(low / passage 15 / clone 2)) (Mycoplasma gallisepticum).